Reading from the N-terminus, the 526-residue chain is Probable feruloyl esterase B-1 (526 aa).

The first 19 residues, 1–19, serve as a signal peptide directing secretion; the sequence is MPSLRRLLPFLAAGSAALA. 2 disulfide bridges follow: C28/C75 and C63/C114. 4 N-linked (GlcNAc...) asparagine glycosylation sites follow: N53, N85, N98, and N138. 3 disulfides stabilise this stretch: C187-C441, C256-C273, and C282-C291. The active-site Acyl-ester intermediate is the S188. N-linked (GlcNAc...) asparagine glycosylation occurs at N246. Ca(2+)-binding residues include D257, D260, A262, D264, and I266. N287 and N311 each carry an N-linked (GlcNAc...) asparagine glycan. Catalysis depends on charge relay system residues D400 and H440. N-linked (GlcNAc...) asparagine glycans are attached at residues N490 and N516. A disulfide bridge links C503 with C525.

Belongs to the tannase family.

It localises to the secreted. It catalyses the reaction feruloyl-polysaccharide + H2O = ferulate + polysaccharide.. Involved in degradation of plant cell walls. Hydrolyzes the feruloyl-arabinose ester bond in arabinoxylans as well as the feruloyl-galactose and feruloyl-arabinose ester bonds in pectin. The protein is Probable feruloyl esterase B-1 (faeB-1) of Aspergillus flavus (strain ATCC 200026 / FGSC A1120 / IAM 13836 / NRRL 3357 / JCM 12722 / SRRC 167).